The following is an 89-amino-acid chain: UPF0175 protein APE_0276a (89 aa).

This sequence belongs to the UPF0175 family.

In Aeropyrum pernix (strain ATCC 700893 / DSM 11879 / JCM 9820 / NBRC 100138 / K1), this protein is UPF0175 protein APE_0276a.